The chain runs to 299 residues: Ribosomal RNA small subunit methyltransferase H (299 aa).

S-adenosyl-L-methionine-binding positions include 36–38 (GGH), Asp-55, Tyr-82, Asp-103, and Gln-110. Basic and acidic residues-rich tracts occupy residues 269–282 (PVRP…ENPR) and 289–299 (RAAERIEEGGD). The disordered stretch occupies residues 269–299 (PVRPSEEEIRENPRARSGRLRAAERIEEGGD).

It belongs to the methyltransferase superfamily. RsmH family.

The protein localises to the cytoplasm. The catalysed reaction is cytidine(1402) in 16S rRNA + S-adenosyl-L-methionine = N(4)-methylcytidine(1402) in 16S rRNA + S-adenosyl-L-homocysteine + H(+). Its function is as follows. Specifically methylates the N4 position of cytidine in position 1402 (C1402) of 16S rRNA. In Thermotoga maritima (strain ATCC 43589 / DSM 3109 / JCM 10099 / NBRC 100826 / MSB8), this protein is Ribosomal RNA small subunit methyltransferase H.